A 271-amino-acid chain; its full sequence is Peroxisomal biogenesis factor 2 (271 aa).

The Peroxisomal matrix portion of the chain corresponds to 1–2 (MS). Residues 3-29 (RVAQLDSIALDKELYGQFWSEFNAAFN) form a helical membrane-spanning segment. Topologically, residues 30–33 (TSEH) are cytoplasmic. The chain crosses the membrane as a helical span at residues 34–60 (KEEWELALNTVVFMCATRFLPHYGSSC). At 61-77 (TYGSALSGVVFQCRKRT) the chain is on the peroxisomal matrix side. Residues 78-97 (LYVVTVLAGYVWKKITHIIF) form a helical membrane-spanning segment. Topologically, residues 98–101 (NGPH) are cytoplasmic. The helical transmembrane segment at 102 to 133 (CGNQMMWLKLYKWVNLLYHGCDVTNFLRFLAA) threads the bilayer. At 134–175 (EGPNARAFLSPLYRAFNVHSTRLIRDGSAIASEFYSNSVFAG) the chain is on the peroxisomal matrix side. Residues 176–197 (LEYQNRQLLWNALLELFSNTLL) form a helical membrane-spanning segment. At 198-271 (TKRGLLTFVK…SGRLTASPVY (74 aa)) the chain is on the cytoplasmic side. Residues cysteine 222, cysteine 225, cysteine 237, cysteine 238, cysteine 243, cysteine 246, cysteine 256, and cysteine 259 each coordinate Zn(2+). The RING-type zinc-finger motif lies at 222-259 (CPRCGGFPTNPYQIACCRANYCYVCVVKALEWSMCDAC).

The protein belongs to the pex2/pex10/pex12 family. As to quaternary structure, component of the PEX2-PEX10-PEX12 retrotranslocation channel, composed of PEX2, PEX10 and PEX12.

Its subcellular location is the peroxisome membrane. It catalyses the reaction [E2 ubiquitin-conjugating enzyme]-S-ubiquitinyl-L-cysteine + [acceptor protein]-L-cysteine = [E2 ubiquitin-conjugating enzyme]-L-cysteine + [acceptor protein]-S-ubiquitinyl-L-cysteine.. It participates in protein modification; protein ubiquitination. E3 ubiquitin-protein ligase component of a retrotranslocation channel required for peroxisome organization by mediating export of the PEX5 receptor from peroxisomes to the cytosol, thereby promoting PEX5 recycling. The retrotranslocation channel is composed of PEX2, PEX10 and PEX12; each subunit contributing transmembrane segments that coassemble into an open channel that specifically allows the passage of PEX5 through the peroxisomal membrane. PEX2 also regulates peroxisome organization by acting as a E3 ubiquitin-protein ligase. PEX2 ubiquitinates PEX5 during its passage through the retrotranslocation channel: catalyzes monoubiquitination of PEX5 at 'Cys-6', a modification that acts as a signal for PEX5 extraction into the cytosol. The protein is Peroxisomal biogenesis factor 2 of Saccharomyces cerevisiae (strain ATCC 204508 / S288c) (Baker's yeast).